A 179-amino-acid polypeptide reads, in one-letter code: Peroxiredoxin (179 aa).

Positions 2–152 (TMEKQVPIVT…VEGWFEEEGF (151 aa)) constitute a Thioredoxin domain. The active-site Cysteine sulfenic acid (-SOH) intermediate (for peroxiredoxin activity) is C56.

Belongs to the peroxiredoxin family. Prx5 subfamily. As to quaternary structure, monomer.

It catalyses the reaction a hydroperoxide + 2 glutathione = an alcohol + glutathione disulfide + H2O. Functionally, thiol-specific peroxidase that catalyzes the reduction of hydrogen peroxide and organic hydroperoxides to water and alcohols, respectively. Plays a role in cell protection against oxidative stress by detoxifying peroxides. The polypeptide is Peroxiredoxin (Rhizobium etli).